The primary structure comprises 294 residues: Cytidine deaminase (294 aa).

CMP/dCMP-type deaminase domains follow at residues Asp48–Lys168 and Val186–Gly294. Asn89–Glu91 contacts substrate. A Zn(2+)-binding site is contributed by His102. Glu104 serves as the catalytic Proton donor. Cys129 and Cys132 together coordinate Zn(2+).

This sequence belongs to the cytidine and deoxycytidylate deaminase family. In terms of assembly, homodimer. Requires Zn(2+) as cofactor.

The enzyme catalyses cytidine + H2O + H(+) = uridine + NH4(+). It carries out the reaction 2'-deoxycytidine + H2O + H(+) = 2'-deoxyuridine + NH4(+). In terms of biological role, this enzyme scavenges exogenous and endogenous cytidine and 2'-deoxycytidine for UMP synthesis. This Klebsiella pneumoniae subsp. pneumoniae (strain ATCC 700721 / MGH 78578) protein is Cytidine deaminase.